Consider the following 366-residue polypeptide: N-methyltransferase fsqC (366 aa).

An N-terminal signal peptide occupies residues 1–18 (MSSNVQDIRGWPPPFANA). Residue N270 is glycosylated (N-linked (GlcNAc...) asparagine).

Belongs to the methyltransferase superfamily.

Its pathway is secondary metabolite biosynthesis. Functionally, N-methyltransferase; part of the gene cluster that mediates the biosynthesis of the isoquinoline alkaloids fumisoquin A, fumisoquin B and fumisoquin C; as well as small amounts of fumipyrrole as a shunt metabolite. The products of the cluster lead to a brown coloration and are important for growth and conidiation. The nonribosomal peptide synthetase-like protein fsqF, which lacks a canonical condensation domain, is required for addition of a serine-derived dehydroalanine moiety to activated tyrosine but is not essential for the subsequent steps leading to isoquinoline formation. A different enzyme, most likely the ATP-grasp enzyme fsqD, is responsible for activation of tyrosine. Three additional enzymes encoded by the fsq cluster, the N-methyltransferase fsqC, the phenol 2-monooxygenase fsqG and the FAD-dependent oxidase fsqB, catalyze the formation of the isoquinoline ring system in the fumisoquins. FsqB converts the fspF thiolation domain-bound (2S,4S,5S)-2-amino-6-(3,4-dihydroxyphenyl)-4-hydroxy-5-(methylamino)hexanoyl into isoquinoline. The cyclization most likely proceeds via a two-step mechanism, beginning with FAD-dependent oxidation of the methyl group to an iminium species followed by electrophilic attack on the deprotonated phenol. The protein is N-methyltransferase fsqC of Aspergillus fumigatus (strain ATCC MYA-4609 / CBS 101355 / FGSC A1100 / Af293) (Neosartorya fumigata).